The sequence spans 81 residues: Sulfur carrier protein TusA (81 aa).

The active-site Cysteine persulfide intermediate is the Cys-19.

The protein belongs to the sulfur carrier protein TusA family. In terms of assembly, interacts with IscS.

The protein resides in the cytoplasm. It participates in tRNA modification. In terms of biological role, sulfur carrier protein involved in sulfur trafficking in the cell. Part of a sulfur-relay system required for 2-thiolation during synthesis of 2-thiouridine of the modified wobble base 5-methylaminomethyl-2-thiouridine (mnm(5)s(2)U) in tRNA. Interacts with IscS and stimulates its cysteine desulfurase activity. Accepts an activated sulfur from IscS, which is then transferred to TusD, and thus determines the direction of sulfur flow from IscS to 2-thiouridine formation. Also appears to be involved in sulfur transfer for the biosynthesis of molybdopterin. The protein is Sulfur carrier protein TusA of Shigella boydii serotype 18 (strain CDC 3083-94 / BS512).